The primary structure comprises 720 residues: uncharacterized protein (720 aa).

A lipid anchor (N-myristoyl glycine; by host) is attached at Gly2.

This is an uncharacterized protein from Cryphonectria parasitica mycoreovirus 1 (strain 9B21) (CpMYRV-1).